A 170-amino-acid polypeptide reads, in one-letter code: Peptide deformylase (170 aa).

Positions 91 and 133 each coordinate Fe cation. Residue E134 is part of the active site. Residue H137 participates in Fe cation binding.

Belongs to the polypeptide deformylase family. It depends on Fe(2+) as a cofactor.

It catalyses the reaction N-terminal N-formyl-L-methionyl-[peptide] + H2O = N-terminal L-methionyl-[peptide] + formate. Removes the formyl group from the N-terminal Met of newly synthesized proteins. Requires at least a dipeptide for an efficient rate of reaction. N-terminal L-methionine is a prerequisite for activity but the enzyme has broad specificity at other positions. The protein is Peptide deformylase of Glaesserella parasuis serovar 5 (strain SH0165) (Haemophilus parasuis).